The primary structure comprises 380 residues: Cytochrome b (380 aa).

4 helical membrane passes run 33–53 (FGSL…FLAM), 77–98 (WLIR…YMHI), 113–133 (WNIG…GYVL), and 178–198 (FFAF…IHLL). Residues His83 and His97 each coordinate heme b. Residues His182 and His196 each coordinate heme b. An a ubiquinone-binding site is contributed by His201. A run of 4 helical transmembrane segments spans residues 226-246 (YKDL…ALFS), 288-308 (LGGV…PLLH), 320-340 (ITQF…WIGG), and 347-367 (FIII…VLFP).

Belongs to the cytochrome b family. In terms of assembly, the cytochrome bc1 complex contains 3 respiratory subunits (MT-CYB, CYC1 and UQCRFS1), 2 core proteins (UQCRC1 and UQCRC2) and probably 6 low-molecular weight proteins. The cofactor is heme b.

Its subcellular location is the mitochondrion inner membrane. Component of the ubiquinol-cytochrome c reductase complex (complex III or cytochrome b-c1 complex) that is part of the mitochondrial respiratory chain. The b-c1 complex mediates electron transfer from ubiquinol to cytochrome c. Contributes to the generation of a proton gradient across the mitochondrial membrane that is then used for ATP synthesis. This chain is Cytochrome b (mt-cyb), found in Carassius auratus (Goldfish).